The following is a 479-amino-acid chain: Glycogen synthase (479 aa).

Residue K15 participates in ADP-alpha-D-glucose binding.

The protein belongs to the glycosyltransferase 1 family. Bacterial/plant glycogen synthase subfamily.

It catalyses the reaction [(1-&gt;4)-alpha-D-glucosyl](n) + ADP-alpha-D-glucose = [(1-&gt;4)-alpha-D-glucosyl](n+1) + ADP + H(+). The protein operates within glycan biosynthesis; glycogen biosynthesis. In terms of biological role, synthesizes alpha-1,4-glucan chains using ADP-glucose. In Histophilus somni (strain 129Pt) (Haemophilus somnus), this protein is Glycogen synthase.